We begin with the raw amino-acid sequence, 414 residues long: Glutamyl-tRNA reductase (414 aa).

Residues 49–52 (TCNR), Ser-108, 113–115 (EPQ), and Gln-119 each bind substrate. Catalysis depends on Cys-50, which acts as the Nucleophile. Residue 188 to 193 (GAGQTG) coordinates NADP(+).

This sequence belongs to the glutamyl-tRNA reductase family. As to quaternary structure, homodimer.

It catalyses the reaction (S)-4-amino-5-oxopentanoate + tRNA(Glu) + NADP(+) = L-glutamyl-tRNA(Glu) + NADPH + H(+). It participates in porphyrin-containing compound metabolism; protoporphyrin-IX biosynthesis; 5-aminolevulinate from L-glutamyl-tRNA(Glu): step 1/2. Its function is as follows. Catalyzes the NADPH-dependent reduction of glutamyl-tRNA(Glu) to glutamate 1-semialdehyde (GSA). The chain is Glutamyl-tRNA reductase from Francisella tularensis subsp. holarctica (strain LVS).